A 422-amino-acid chain; its full sequence is Monoacylglycerol lipase ABHD2 (422 aa).

The Cytoplasmic segment spans residues M1–E15. The helical; Signal-anchor for type II membrane protein transmembrane segment at M16 to V36 threads the bilayer. At R37–E422 the chain is on the extracellular side. The AB hydrolase-1 domain maps to M134–G385. The N-linked (GlcNAc...) asparagine glycan is linked to N142. The active-site Nucleophile is S213. N-linked (GlcNAc...) asparagine glycosylation is found at N285, N335, and N344. Catalysis depends on charge relay system residues D348 and H379.

The protein belongs to the AB hydrolase superfamily. AB hydrolase 4 family.

The protein localises to the cell membrane. The enzyme catalyses Hydrolyzes glycerol monoesters of long-chain fatty acids.. It carries out the reaction an acetyl ester + H2O = an aliphatic alcohol + acetate + H(+). The catalysed reaction is a triacylglycerol + H2O = a diacylglycerol + a fatty acid + H(+). It catalyses the reaction 2-(5Z,8Z,11Z,14Z-eicosatetraenoyl)-glycerol + H2O = glycerol + (5Z,8Z,11Z,14Z)-eicosatetraenoate + H(+). The enzyme catalyses a butanoate ester + H2O = an aliphatic alcohol + butanoate + H(+). It carries out the reaction hexadecanoate ester + H2O = an aliphatic alcohol + hexadecanoate + H(+). Acylglycerol lipase activity is activated upon binding to progesterone. Its function is as follows. Progesterone-dependent acylglycerol lipase that catalyzes hydrolysis of endocannabinoid arachidonoylglycerol (AG) from cell membrane. Acts as a progesterone receptor: progesterone-binding activates the acylglycerol lipase activity, mediating degradation of 1-arachidonoylglycerol (1AG) and 2-arachidonoylglycerol (2AG) to glycerol and arachidonic acid (AA). Also displays an ester hydrolase activity against acetyl ester, butanoate ester and hexadecanoate ester. Plays a key role in sperm capacitation in response to progesterone by mediating degradation of 2AG, an inhibitor of the sperm calcium channel CatSper, leading to calcium influx via CatSper and sperm activation. May also play a role in smooth muscle cells migration. The sequence is that of Monoacylglycerol lipase ABHD2 (abhd2b) from Danio rerio (Zebrafish).